A 606-amino-acid polypeptide reads, in one-letter code: Mannan endo-1,4-beta-mannosidase A (606 aa).

The first 19 residues, 1-19, serve as a signal peptide directing secretion; it reads MKSLNVILTLLSLIISVLS. Positions 22–140 constitute a CBM6 domain; that stretch reads VYYEAEDGKL…WMWVDAFVIN (119 aa). Positions 164 to 458 constitute a GH26 domain; that stretch reads PAAKKLYDFL…FNHKTVMNMD (295 aa). Trp-285 is a binding site for substrate. The Proton donor role is filled by Glu-318. The substrate site is built by Trp-323 and Tyr-378. Glu-406 functions as the Nucleophile in the catalytic mechanism. A linker region spans residues 472–489; it reads SGSSHNGNSESNSNTGNS. CBM10 domains are found at residues 491–527, 530–566, and 569–605; these read ECWSINLGYPCCIGDYVVTTDENGDWGVENNEWCGIV, SCWSEPLGYPCCVGNTVISADESGDWGVENNEWCGIV, and SCWAEFLGYPCCVGNTVISTDEFGDWGVENDDWCGIL. Position 493 (Trp-493) interacts with substrate.

The protein belongs to the glycosyl hydrolase 26 family.

The enzyme catalyses Random hydrolysis of (1-&gt;4)-beta-D-mannosidic linkages in mannans, galactomannans and glucomannans.. In terms of biological role, hydrolyzes 1,4-beta linked polysaccharide backbones of mannans, one of the major hemicellulose components in hardwoods and softwoods. Shows very high activity against mannohexaose but not against mannopentaose and smaller mannooligosaccharides. The major products released from mannooligosaccharide hydrolysis are mannose and mannobiose. The reiterated 40 AA domain is involved in binding the cellulase-hemicellulase complex. This Piromyces sp protein is Mannan endo-1,4-beta-mannosidase A (MANA).